Here is a 673-residue protein sequence, read N- to C-terminus: MADISIPGVTDKYKTNDLIKNLMEAERVPLTREQKQLETYKTQQETWRNVNTQMTYVRESVRSLYSFDNPFSSKLASSTDEYAVSATPKRDAALESFKVEVLQTATADRFLSAELDAKMQVPAGNYEYAVNDKKVSFNWKGGKLSDFVAALNRRSANTIKASIIGISKDKQALLIESLITGSENRLTFSGAARDFALQTGMIGKAPAAAQDSFTIKRDTIRNADNLNSKTVEFSQDALTVPPRSGFESPIPQKIAAEKTKTIRFNVRAIDIPAEEVLPDKPELPSAGTVSFKDVTLSNEEFDTKLPLSEETEKVPAEPVEDYAAVFVKAADGTEIPLGPLKPNGENTSYSIAASDYPGMSALVIKNNNTHKKIVMTKPETIDMAASSGYIPLNPAETAADAKIKYQGITITRPSNTIDDVVPNVTLNIQAKTEKPATISIEPDKKAAKEALITFVGKYNRLMAELNILTQTKPEIITELEYFTEDEAKAAEKRLGMFQTEFSLANGKRALQTITSGRYPTADDAQITMCRKSGISTSASTSGFTGVSASRLRGYLEIDEKKLDAAPQSNMQDIKNLFGYDSDGDLVIDSGIAFAIDKNLQSFTQIGGIIASKTSTLNTRISSSQKNIETLESKLKRKEQDLKTKYGQMEASLNSLEKQSDSITNFSDNQRSGR.

Residues Ser-611–Asn-664 adopt a coiled-coil conformation. Residues Glu-649–Arg-673 form a disordered region. A compositionally biased stretch (polar residues) spans Ala-650–Arg-673.

It belongs to the FliD family. Homopentamer.

Its subcellular location is the periplasmic flagellum. It is found in the periplasm. Required for the morphogenesis and for the elongation of the flagellar filament by facilitating polymerization of the flagellin monomers at the tip of growing filament. Forms a capping structure, which prevents flagellin subunits (transported through the central channel of the flagellum) from leaking out without polymerization at the distal end. This is Flagellar hook-associated protein 2 (fliD) from Treponema maltophilum.